The following is a 283-amino-acid chain: S-methyl-5'-thioadenosine phosphorylase (283 aa).

Threonine 18 provides a ligand contact to phosphate. Position 51 is an N6-acetyllysine (lysine 51). Phosphate-binding positions include 60–61 (RH) and 93–94 (TA). Methionine 196 is a binding site for substrate. Threonine 197 lines the phosphate pocket. Substrate is bound at residue 220–222 (DYD).

The protein belongs to the PNP/MTAP phosphorylase family. MTAP subfamily. As to quaternary structure, homotrimer. As to expression, ubiquitously expressed.

It is found in the cytoplasm. Its subcellular location is the nucleus. It catalyses the reaction S-methyl-5'-thioadenosine + phosphate = 5-(methylsulfanyl)-alpha-D-ribose 1-phosphate + adenine. Its pathway is amino-acid biosynthesis; L-methionine biosynthesis via salvage pathway; S-methyl-5-thio-alpha-D-ribose 1-phosphate from S-methyl-5'-thioadenosine (phosphorylase route): step 1/1. Its activity is regulated as follows. Inhibited by 5'-methylthiotubercin and 5'-chloroformycin. Functionally, catalyzes the reversible phosphorylation of S-methyl-5'-thioadenosine (MTA) to adenine and 5-methylthioribose-1-phosphate. Involved in the breakdown of MTA, a major by-product of polyamine biosynthesis. Responsible for the first step in the methionine salvage pathway after MTA has been generated from S-adenosylmethionine. Has broad substrate specificity with 6-aminopurine nucleosides as preferred substrates. This Homo sapiens (Human) protein is S-methyl-5'-thioadenosine phosphorylase.